We begin with the raw amino-acid sequence, 253 residues long: Electron transfer flavoprotein subunit beta, mitochondrial (253 aa).

It belongs to the ETF beta-subunit/FixA family. In terms of assembly, heterodimer of an alpha and a beta subunit. The cofactor is FAD. Requires AMP as cofactor.

It localises to the mitochondrion matrix. Functionally, the electron transfer flavoprotein serves as a specific electron acceptor for several dehydrogenases, including five acyl-CoA dehydrogenases, glutaryl-CoA and sarcosine dehydrogenase. It transfers the electrons to the main mitochondrial respiratory chain via ETF-ubiquinone oxidoreductase (ETF dehydrogenase). The chain is Electron transfer flavoprotein subunit beta, mitochondrial (ETFB) from Oryza sativa subsp. indica (Rice).